The primary structure comprises 146 residues: Large ribosomal subunit protein uL16 (146 aa).

The protein belongs to the universal ribosomal protein uL16 family. Part of the 50S ribosomal subunit.

Binds 23S rRNA and is also seen to make contacts with the A and possibly P site tRNAs. The protein is Large ribosomal subunit protein uL16 of Caulobacter sp. (strain K31).